We begin with the raw amino-acid sequence, 802 residues long: Cell division cycle 5-like protein (802 aa).

HTH myb-type domains are found at residues Met1 to Pro56 and Ser57 to Ala108. 2 DNA-binding regions (H-T-H motif) span residues Trp31–Leu54 and Trp82–Leu104. The disordered stretch occupies residues Ala108 to Asp143. A compositionally biased stretch (basic and acidic residues) spans Asp118–Glu127. Lys135 participates in a covalent cross-link: Glycyl lysine isopeptide (Lys-Gly) (interchain with G-Cter in SUMO2). Residues Ile142 to Gln245 adopt a coiled-coil conformation. The Nuclear localization signal motif lies at Lys165–Lys271. The interval Lys200–Arg206 is required for interaction with CTNNBL1. Lys219 is covalently cross-linked (Glycyl lysine isopeptide (Lys-Gly) (interchain with G-Cter in SUMO2)). Thr227 is modified (phosphothreonine). Residues Asp246 to Lys262 are compositionally biased toward basic and acidic residues. A disordered region spans residues Asp246–Ala278. The segment at Arg260–Gly606 is interaction with PPP1R8. Residues Ser303 and Ser358 each carry the phosphoserine modification. Phosphothreonine occurs at positions 377, 385, 396, 404, 411, and 415. The span at Leu409–His418 shows a compositional bias: polar residues. Positions Leu409–Tyr459 are disordered. A Phosphoserine modification is found at Ser417. A phosphothreonine mark is found at Thr424 and Thr430. Polar residues predominate over residues Arg426–Gly440. Ser437 bears the Phosphoserine mark. 2 positions are modified to phosphothreonine: Thr438 and Thr442. Lys487 is covalently cross-linked (Glycyl lysine isopeptide (Lys-Gly) (interchain with G-Cter in SUMO2)). The segment at Glu501–Gln659 is interaction with DAPK3. Coiled coils occupy residues Arg676–Gly701 and Pro764–Phe802. The interval Glu706–Ala800 is interaction with PLRG1.

The protein belongs to the CEF1 family. Homodimer. Interacts with DAPK3. Component of the precatalytic, catalytic and postcatalytic spliceosome complexes. Part of a spliceosomal 'core' complex consisting of CDC5L, PLRG1, SPF27, CCAP1, CCAP3 and CCAP6. Interacts with PLRG1, Lodestar/TTF2, and NIPP1/PPP1R8. Component of the minor spliceosome, which splices U12-type introns. Within this complex, interacts with SCNM1. Component of the PRP19-CDC5L splicing complex composed of a core complex comprising a homotetramer of PRPF19, CDC5L, PLRG1 and BCAS2, and at least three less stably associated proteins CTNNBL1, CWC15 and HSPA8. Interacts (via its C-terminus) directly in the complex with PRPF19 and BCAS2. Interacts (via its C-terminus) directly with PRGL1 (via its WD40 repeat domain); the interaction is required for mRNA splicing but not for spliceosome assembly. Also interacts with CTNNBL1. Interacts with PRPF19 (via N-terminus). Interacts with USB1. Interacts with DDX41. In terms of processing, phosphorylated on serine and threonine residues. Phosphorylation on Thr-411 and Thr-438 is required for CDC5L-mediated mRNA splicing. Has no effect on subcellular location nor on homodimerization. Phosphorylated in vitro by CDK2. Phosphorylation enhances interaction with PPP1R8.

The protein localises to the nucleus. It is found in the nucleus speckle. It localises to the cytoplasm. DNA-binding protein involved in cell cycle control. May act as a transcription activator. Plays a role in pre-mRNA splicing as core component of precatalytic, catalytic and postcatalytic spliceosomal complexes. Component of the PRP19-CDC5L complex that forms an integral part of the spliceosome and is required for activating pre-mRNA splicing. The PRP19-CDC5L complex may also play a role in the response to DNA damage (DDR). As a component of the minor spliceosome, involved in the splicing of U12-type introns in pre-mRNAs. The polypeptide is Cell division cycle 5-like protein (CDC5L) (Bos taurus (Bovine)).